We begin with the raw amino-acid sequence, 366 residues long: Cyclin-O protein A (366 aa).

Disordered regions lie at residues 18-55 (AAFSSGKRKRDSGYSPGDATPGDRGEGGPDWPSAGIKK) and 80-99 (YETPSPSPVAPTPTNEPYDS).

This sequence belongs to the cyclin family.

The protein localises to the cytoplasm. Its function is as follows. Specifically required for generation of multiciliated cells, possibly by promoting a cell cycle state compatible with centriole amplification and maturation. Acts downstream of mcidas to promote mother centriole amplification and maturation in preparation for apical docking. The sequence is that of Cyclin-O protein A (ccno-a) from Xenopus laevis (African clawed frog).